Here is an 876-residue protein sequence, read N- to C-terminus: Aspartate--tRNA(Asp/Asn) ligase (876 aa).

The segment at 1-278 is unknown; that stretch reads MAATDTPWRP…FGFKRAYEGF (278 aa). The aspartyl-tRNA synthetase stretch occupies residues 279-876; sequence MHVYRSHTCG…PKPKKEVKEG (598 aa). Residue Glu-453 participates in L-aspartate binding. Residues 477-480 are aspartate; it reads QQFK. L-aspartate is bound by residues Arg-499 and His-729. 499–501 contacts ATP; the sequence is RDE. ATP is bound at residue Glu-763. Residue Arg-770 participates in L-aspartate binding. 815 to 818 lines the ATP pocket; sequence GVDR.

The protein belongs to the class-II aminoacyl-tRNA synthetase family. Type 1 subfamily. As to quaternary structure, homodimer.

The protein resides in the cytoplasm. It catalyses the reaction tRNA(Asx) + L-aspartate + ATP = L-aspartyl-tRNA(Asx) + AMP + diphosphate. Functionally, aspartyl-tRNA synthetase with relaxed tRNA specificity since it is able to aspartylate not only its cognate tRNA(Asp) but also tRNA(Asn). Reaction proceeds in two steps: L-aspartate is first activated by ATP to form Asp-AMP and then transferred to the acceptor end of tRNA(Asp/Asn). The polypeptide is Aspartate--tRNA(Asp/Asn) ligase (aspS) (Paramagnetospirillum magneticum (strain ATCC 700264 / AMB-1) (Magnetospirillum magneticum)).